The chain runs to 748 residues: E3 ubiquitin-protein ligase DTX3L (748 aa).

N-acetylalanine is present on A2. S9 carries the phosphoserine modification. Disordered regions lie at residues 94 to 117, 209 to 238, and 528 to 562; these read DLRP…PSLT, EQKR…PPDQ, and QETP…PAAS. Over residues 101–117 the composition is skewed to polar residues; that stretch reads SLTQPVETPSSRPPSLT. 2 stretches are compositionally biased toward basic and acidic residues: residues 209 to 219 and 227 to 236; these read EQKRKGSEQKR and TPPDVEREPP. A Phosphoserine modification is found at S215. S536 is modified (phosphoserine). An RING-type zinc finger spans residues 569-608; sequence CVICMDTISNKHVLPKCKHEFCTSCISKAMLIKPVCPVCL.

It belongs to the Deltex family. Homodimer and heterodimer. Can heterodimerize with DTX1, enhancing its ubiquitin ligase activity in vitro. Interacts (via N-terminus) with ADP ribosyltransferase PARP9/BAL1 (via PARP catalytic domain) forming a stable complex; the interaction is required to activate PARP9 but is dispensable for DTX3L catalytic activity. Forms a complex with STAT1 and PARP9 independently of IFNB1 or IFNG-mediated STAT1 'Tyr-701' phosphorylation. Found in a complex with PARP9, STAT1 and H2BC9. Found in a complex with E3 ligase ITCH and ESCRT-0 components HGS and STAM. Interacts (via C-terminus) with ITCH; the interaction is increased upon CXCL12 stimulation and inhibits ITCH catalytic activity; the interaction is direct. Interacts with HGS and STAM; the interaction brings together HGS and STAM and promotes their recruitment to early endosomes. Post-translationally, autoubiquitinated.

Its subcellular location is the cytoplasm. The protein resides in the nucleus. It localises to the early endosome membrane. It is found in the lysosome membrane. The enzyme catalyses S-ubiquitinyl-[E2 ubiquitin-conjugating enzyme]-L-cysteine + [acceptor protein]-L-lysine = [E2 ubiquitin-conjugating enzyme]-L-cysteine + N(6)-ubiquitinyl-[acceptor protein]-L-lysine.. It functions in the pathway protein modification; protein ubiquitination. With respect to regulation, binding to PARP9 enhances DTX3L catalytic activity. Functionally, E3 ubiquitin-protein ligase which, in association with ADP-ribosyltransferase PARP9, plays a role in DNA damage repair and in interferon-mediated antiviral responses. Monoubiquitinates several histones, including histone H2A, H2B, H3 and H4. In response to DNA damage, mediates monoubiquitination of 'Lys-91' of histone H4 (H4K91ub1). The exact role of H4K91ub1 in DNA damage response is still unclear but it may function as a licensing signal for additional histone H4 post-translational modifications such as H4 'Lys-20' methylation (H4K20me). PARP1-dependent PARP9-DTX3L-mediated ubiquitination promotes the rapid and specific recruitment of 53BP1/TP53BP1, UIMC1/RAP80, and BRCA1 to DNA damage sites. By monoubiquitinating histone H2B H2BC9/H2BJ and thereby promoting chromatin remodeling, positively regulates STAT1-dependent interferon-stimulated gene transcription and thus STAT1-mediated control of viral replication. Independently of its catalytic activity, promotes the sorting of chemokine receptor CXCR4 from early endosome to lysosome following CXCL12 stimulation by reducing E3 ligase ITCH activity and thus ITCH-mediated ubiquitination of endosomal sorting complex required for transport ESCRT-0 components HGS and STAM. In addition, required for the recruitment of HGS and STAM to early endosomes. This is E3 ubiquitin-protein ligase DTX3L (Dtx3l) from Mus musculus (Mouse).